Consider the following 189-residue polypeptide: UPF0301 protein PA14_05290 (189 aa).

Belongs to the UPF0301 (AlgH) family.

The sequence is that of UPF0301 protein PA14_05290 from Pseudomonas aeruginosa (strain UCBPP-PA14).